Reading from the N-terminus, the 268-residue chain is Cytochrome c oxidase subunit 3 (268 aa).

Helical transmembrane passes span 19–39, 49–69, 85–105, 124–144, 165–185, 202–222, and 245–265; these read PWPILVSFSLFNLAIGTVLTM, FDLGLAVTVGSILLWTRDIVI, LIIGFILFIISEVFAFISVFW, PVGIIPLDTFSLPLFNTIILL, SIIGLFLTVALALIFSYFQAF, VFFASTGLHGIHVMLGTLFLF, and ILYWHFVDLVWLFLFLVVYFW.

The protein belongs to the cytochrome c oxidase subunit 3 family. Component of the cytochrome c oxidase (complex IV, CIV), a multisubunit enzyme composed of a catalytic core of 3 subunits and several supernumerary subunits. The complex exists as a monomer or a dimer and forms supercomplexes (SCs) in the inner mitochondrial membrane with ubiquinol-cytochrome c oxidoreductase (cytochrome b-c1 complex, complex III, CIII).

It is found in the mitochondrion inner membrane. It catalyses the reaction 4 Fe(II)-[cytochrome c] + O2 + 8 H(+)(in) = 4 Fe(III)-[cytochrome c] + 2 H2O + 4 H(+)(out). Component of the cytochrome c oxidase, the last enzyme in the mitochondrial electron transport chain which drives oxidative phosphorylation. The respiratory chain contains 3 multisubunit complexes succinate dehydrogenase (complex II, CII), ubiquinol-cytochrome c oxidoreductase (cytochrome b-c1 complex, complex III, CIII) and cytochrome c oxidase (complex IV, CIV), that cooperate to transfer electrons derived from NADH and succinate to molecular oxygen, creating an electrochemical gradient over the inner membrane that drives transmembrane transport and the ATP synthase. Cytochrome c oxidase is the component of the respiratory chain that catalyzes the reduction of oxygen to water. Electrons originating from reduced cytochrome c in the intermembrane space (IMS) are transferred via the dinuclear copper A center (CU(A)) of subunit 2 and heme A of subunit 1 to the active site in subunit 1, a binuclear center (BNC) formed by heme A3 and copper B (CU(B)). The BNC reduces molecular oxygen to 2 water molecules using 4 electrons from cytochrome c in the IMS and 4 protons from the mitochondrial matrix. The protein is Cytochrome c oxidase subunit 3 (COIII) of Schizophyllum commune (Split gill fungus).